A 377-amino-acid polypeptide reads, in one-letter code: SH2/SH3 adapter protein NCK1 (377 aa).

Ala-2 carries the post-translational modification N-acetylalanine. Positions 2-61 constitute an SH3 1 domain; sequence AEEVVVVAKFDYVAQQEQELDIKKNERLWLLDDSKSWWRVRNSMNKTGFVPSNYVERKNS. Phosphoserine occurs at positions 85, 89, 91, and 96. At Tyr-105 the chain carries Phosphotyrosine. The 60-residue stretch at 106 to 165 folds into the SH3 2 domain; it reads DLNMPAYVKFNYMAEREDELSLIKGTKVIVMEKCSDGWWRGSYNGQVGWFPSNYVTEEGD. Phosphoserine is present on Ser-166. The SH3 3 domain occupies 190–252; it reads QVLHVVQALY…PKNYVTVMQN (63 aa). The SH2 domain occupies 282-376; sequence WYYGKVTRHQ…GEKLYLVKHL (95 aa).

In terms of assembly, interacts (via SH2 domain and SH3 domain 2) with EGFR. Interacts with PAK1 and SOS1. Interacts (via SH3 domains) with PKN2. Associates with BLNK, PLCG1, VAV1 and NCK1 in a B-cell antigen receptor-dependent fashion. Interacts with SOCS7. This interaction is required for nuclear import. Part of a complex containing PPP1R15B, PP1 and NCK1. Interacts with RALGPS1. Interacts with CAV2 (tyrosine phosphorylated form). Interacts with ADAM15. Interacts with FASLG. Directly interacts with RASA1. Interacts with isoform 4 of MINK1. Interacts with FLT1 (tyrosine phosphorylated). Interacts with KDR (tyrosine phosphorylated). Interacts (via SH2 domain) with EPHB1; activates the JUN cascade to regulate cell adhesion. Interacts with EPHA2. Interacts (via SH2 domain) with PDGFRB (tyrosine phosphorylated). Interacts with the inactive form of EIF2AK2/PKR. Interacts with PTPN1. Interacts with INSR/insulin receptor (in response to insulin stimulation); This interaction may mediate PTPN1 recruitment leading to INSR dephosphorylation. Interacts with IRS1. In terms of processing, phosphorylated on Ser and Tyr residues. Phosphorylated in response to activation of EGFR and FcERI. Phosphorylated by activated PDGFRB.

The protein resides in the cytoplasm. It localises to the endoplasmic reticulum. The protein localises to the nucleus. Functionally, adapter protein which associates with tyrosine-phosphorylated growth factor receptors, such as KDR and PDGFRB, or their cellular substrates. Maintains low levels of EIF2S1 phosphorylation by promoting its dephosphorylation by PP1. Plays a role in the DNA damage response, not in the detection of the damage by ATM/ATR, but for efficient activation of downstream effectors, such as that of CHEK2. Plays a role in ELK1-dependent transcriptional activation in response to activated Ras signaling. Modulates the activation of EIF2AK2/PKR by dsRNA. May play a role in cell adhesion and migration through interaction with ephrin receptors. The polypeptide is SH2/SH3 adapter protein NCK1 (NCK1) (Homo sapiens (Human)).